We begin with the raw amino-acid sequence, 473 residues long: MMTKVLGMAPVLGPRPPQEQVGPLMVKVEEKEEKGKYLPSLEMFRQRFRQFGYHDTPGPREALSQLRVLCCEWLRPEIHTKEQILELLVLEQFLTILPQELQAWVQEHCPESAEEAVTLLEDLERELDEPGHQVSTPPNEQKPVWEKISSSGTAKESPSSMQPQPLETSHNYESWGPLYIQESGEEQEFAQDPRKVRDCRLSTQHEESADEQKGSEAEGLKEDIISVIIANKPEASLERQCVNLENEKGTKPPLQEAGSKKGRESVPTKPTPGERRYICAECGKAFSNSSNLTKHRRTHTGEKPYVCTKCGKAFSHSSNLTLHYRTHLVDRPYDCKCGKAFGQSSDLLKHQRMHTEEAPYQCKDCGKAFSGKGSLIRHYRIHTGEKPYQCNECGKSFSQHAGLSSHQRLHTGEKPYKCKECGKAFNHSSNFNKHHRIHTGEKPYWCHHCGKTFCSKSNLSKHQRVHTGEGEAP.

A Glycyl lysine isopeptide (Lys-Gly) (interchain with G-Cter in SUMO2) cross-link involves residue Lys27. The 83-residue stretch at Arg45–Leu127 folds into the SCAN box domain. Positions Leu127–Asn171 are disordered. Residues Ile148–Asn171 show a composition bias toward polar residues. Residues Lys221 and Lys232 each participate in a glycyl lysine isopeptide (Lys-Gly) (interchain with G-Cter in SUMO2) cross-link. The disordered stretch occupies residues Leu244–Pro272. Over residues Gly258 to Pro272 the composition is skewed to basic and acidic residues. 7 C2H2-type zinc fingers span residues Tyr277 to His299, Tyr305 to His327, Tyr333 to His354, Tyr360 to His382, Tyr388 to His410, Tyr416 to His438, and Tyr444 to His466. Lys349 participates in a covalent cross-link: Glycyl lysine isopeptide (Lys-Gly) (interchain with G-Cter in SUMO2).

The protein belongs to the krueppel C2H2-type zinc-finger protein family.

Its subcellular location is the nucleus. Strong transcriptional activator. Plays an important role in spermatogenesis; essential for the progression of meiotic prophase I in spermatocytes. The chain is Zinc finger and SCAN domain-containing protein 21 (ZSCAN21) from Gorilla gorilla gorilla (Western lowland gorilla).